Reading from the N-terminus, the 326-residue chain is Phospho-N-acetylmuramoyl-pentapeptide-transferase (326 aa).

9 consecutive transmembrane segments (helical) span residues Ile3–Ile23, Thr51–Phe71, Val79–Leu99, Leu115–Met135, Val138–Val158, Gly169–Ala189, Met195–Asn215, Val221–His243, and Phe306–Met326.

It belongs to the glycosyltransferase 4 family. MraY subfamily. Requires Mg(2+) as cofactor.

It localises to the cell membrane. The catalysed reaction is UDP-N-acetyl-alpha-D-muramoyl-L-alanyl-gamma-D-glutamyl-L-lysyl-D-alanyl-D-alanine + di-trans,octa-cis-undecaprenyl phosphate = Mur2Ac(oyl-L-Ala-gamma-D-Glu-L-Lys-D-Ala-D-Ala)-di-trans,octa-cis-undecaprenyl diphosphate + UMP. The protein operates within cell wall biogenesis; peptidoglycan biosynthesis. Its function is as follows. Catalyzes the initial step of the lipid cycle reactions in the biosynthesis of the cell wall peptidoglycan: transfers peptidoglycan precursor phospho-MurNAc-pentapeptide from UDP-MurNAc-pentapeptide onto the lipid carrier undecaprenyl phosphate, yielding undecaprenyl-pyrophosphoryl-MurNAc-pentapeptide, known as lipid I. The polypeptide is Phospho-N-acetylmuramoyl-pentapeptide-transferase (Streptococcus pneumoniae (strain ATCC 700669 / Spain 23F-1)).